Reading from the N-terminus, the 333-residue chain is Adenosine deaminase (333 aa).

The Zn(2+) site is built by His12 and His14. Substrate is bound by residues His14, Asp16, and Gly170. Residue His197 participates in Zn(2+) binding. The active-site Proton donor is Glu200. Residue Asp278 coordinates Zn(2+). Asp279 contacts substrate.

This sequence belongs to the metallo-dependent hydrolases superfamily. Adenosine and AMP deaminases family. Adenosine deaminase subfamily. Requires Zn(2+) as cofactor.

The enzyme catalyses adenosine + H2O + H(+) = inosine + NH4(+). It carries out the reaction 2'-deoxyadenosine + H2O + H(+) = 2'-deoxyinosine + NH4(+). Catalyzes the hydrolytic deamination of adenosine and 2-deoxyadenosine. This Aliivibrio fischeri (strain MJ11) (Vibrio fischeri) protein is Adenosine deaminase.